A 258-amino-acid chain; its full sequence is Thiazole synthase (258 aa).

K97 (schiff-base intermediate with DXP) is an active-site residue. 1-deoxy-D-xylulose 5-phosphate contacts are provided by residues G158, A184–G185, and N206–T207.

It belongs to the ThiG family. As to quaternary structure, homotetramer. Forms heterodimers with either ThiH or ThiS.

The protein localises to the cytoplasm. The catalysed reaction is [ThiS sulfur-carrier protein]-C-terminal-Gly-aminoethanethioate + 2-iminoacetate + 1-deoxy-D-xylulose 5-phosphate = [ThiS sulfur-carrier protein]-C-terminal Gly-Gly + 2-[(2R,5Z)-2-carboxy-4-methylthiazol-5(2H)-ylidene]ethyl phosphate + 2 H2O + H(+). The protein operates within cofactor biosynthesis; thiamine diphosphate biosynthesis. Functionally, catalyzes the rearrangement of 1-deoxy-D-xylulose 5-phosphate (DXP) to produce the thiazole phosphate moiety of thiamine. Sulfur is provided by the thiocarboxylate moiety of the carrier protein ThiS. In vitro, sulfur can be provided by H(2)S. The polypeptide is Thiazole synthase (Marinomonas sp. (strain MWYL1)).